The primary structure comprises 1023 residues: GATOR2 complex protein WDR24 (1023 aa).

WD repeat units lie at residues 16-54 (NLGSPLSAISSSPDSTKLIVAGRDIVKIVSVQNNEFKVT), 64-108 (SLNY…SKSV), 114-154 (DHSR…NASK), 159-199 (PKSE…IAVE), 203-243 (SHQG…SLNN), 245-287 (STIS…IPLF), and 291-329 (DHRDVPTGLIWKSPSSLISCSKDSHLLLNEFQDSYKPYQ). Over residues 563 to 578 (SKNIIDNSNDSNQEIN) the composition is skewed to low complexity. 2 disordered regions span residues 563–621 (SKNI…EPPS) and 661–824 (QKST…SIEN). Over residues 584–593 (KEDEEEDDDN) the composition is skewed to acidic residues. Polar residues predominate over residues 661–681 (QKSTDNISDNNSNVHVNIKRQ). Residues 682-695 (NQPTNNNNNNSNID) are compositionally biased toward low complexity. A compositionally biased stretch (basic and acidic residues) spans 696-742 (NLEKKSNKSKSTKENKESSLTDQNKQKRNDNKEKIDNNEIDNDNKDN). A compositionally biased stretch (acidic residues) spans 743–759 (NDDDDNDVDNIGEDNDE). Low complexity predominate over residues 760–812 (INNNNDNNNNNNNNNNNNNNNNNNNNNNNNNNNNNNNNKNNNNDNNNNNNINN). The C4-type zinc finger occupies 947 to 969 (ACSSCGKSIPQNSIICEKCNKAS). Residues C948, C951, C962, C965, C972, C975, C986, C989, H991, H994, H997, C1010, C1014, H1016, and C1018 each coordinate Zn(2+). Residues 970–1021 (SKCSICRLPVKGMWVWCQGCGHGGHLEHMKSWFIDKNQKSCPTGCTHICTPF) form an RING-type; atypical zinc finger.

The protein belongs to the WD repeat WDR24 family. Probably part of the GATOR complex.

It localises to the lysosome membrane. It carries out the reaction S-ubiquitinyl-[E2 ubiquitin-conjugating enzyme]-L-cysteine + [acceptor protein]-L-lysine = [E2 ubiquitin-conjugating enzyme]-L-cysteine + N(6)-ubiquitinyl-[acceptor protein]-L-lysine.. It participates in protein modification; protein ubiquitination. Its function is as follows. As a component of the GATOR complex may function in the amino acid-sensing branch of the TORC1 signaling pathway. The sequence is that of GATOR2 complex protein WDR24 from Dictyostelium discoideum (Social amoeba).